Consider the following 249-residue polypeptide: ATP synthase subunit a (249 aa).

Transmembrane regions (helical) follow at residues 26 to 46 (FTNV…FLYL), 84 to 104 (FFPF…IGLF), 114 to 134 (IIVT…YGFF), 143 to 163 (LFVP…IEII), 185 to 205 (ITLK…ALGI), and 208 to 228 (AVLP…VAFL).

This sequence belongs to the ATPase A chain family. In terms of assembly, F-type ATPases have 2 components, CF(1) - the catalytic core - and CF(0) - the membrane proton channel. CF(1) has five subunits: alpha(3), beta(3), gamma(1), delta(1), epsilon(1). CF(0) has three main subunits: a(1), b(2) and c(9-12). The alpha and beta chains form an alternating ring which encloses part of the gamma chain. CF(1) is attached to CF(0) by a central stalk formed by the gamma and epsilon chains, while a peripheral stalk is formed by the delta and b chains.

The protein resides in the cell inner membrane. Its function is as follows. Key component of the proton channel; it plays a direct role in the translocation of protons across the membrane. The polypeptide is ATP synthase subunit a (Brucella canis (strain ATCC 23365 / NCTC 10854 / RM-666)).